A 307-amino-acid chain; its full sequence is Taste receptor type 2 member 10 (307 aa).

Residues 1-6 (MLRVVE) lie on the Extracellular side of the membrane. Residues 7-27 (GIFIFVVVSESVFGVLGNGFI) form a helical membrane-spanning segment. Residues 28-42 (GLVNCIDCAKNKLST) lie on the Cytoplasmic side of the membrane. Residues 43–63 (IGFILTGLAISRIFLIWIIIT) form a helical membrane-spanning segment. At 64–100 (DGFIQIFSPNIYASGNLIEYISYFWVIGNQSSMWFAT) the chain is on the extracellular side. Residue N92 is glycosylated (N-linked (GlcNAc...) asparagine). Residues 101–121 (SLSIFYFLKIANFSNYIFLWL) form a helical membrane-spanning segment. Residues 122-126 (KSRTN) are Cytoplasmic-facing. The chain crosses the membrane as a helical span at residues 127–147 (MVLPFMIVFLLISSLLNFAYI). Residues 148–179 (AKILNDYKTKNDTVWDLNMYKSEYFIKQILLN) lie on the Extracellular side of the membrane. Residue N158 is glycosylated (N-linked (GlcNAc...) asparagine). The helical transmembrane segment at 180–200 (LGVIFFFTLSLITCIFLIISL) threads the bilayer. Residues 201–227 (WRHNRQMQSNVTGLRDSNTEAHVKAMK) are Cytoplasmic-facing. Residues 228-248 (VLISFIILFILYFIGMAIEIS) traverse the membrane as a helical segment. Topologically, residues 249-257 (CFTVRENKL) are extracellular. A helical membrane pass occupies residues 258 to 278 (LLMFGMTTTAIYPWGHSFILI). At 279-307 (LGNSKLKQASLRVLQQLKCCEKRKNLRVT) the chain is on the cytoplasmic side.

This sequence belongs to the G-protein coupled receptor T2R family. As to expression, expressed in subsets of taste receptor cells of the tongue and palate epithelium and exclusively in gustducin-positive cells.

The protein resides in the membrane. Gustducin-coupled strychnine receptor implicated in the perception of bitter compounds in the oral cavity and the gastrointestinal tract. Signals through PLCB2 and the calcium-regulated cation channel TRPM5. In Homo sapiens (Human), this protein is Taste receptor type 2 member 10 (TAS2R10).